Consider the following 102-residue polypeptide: Acid shock protein (102 aa).

The N-terminal stretch at 1-21 is a signal peptide; it reads MKKVLALVVAAAMGLSSAAFA. Residues 21 to 41 show a composition bias toward low complexity; the sequence is AAETTTTPAPTATTTKAAPAK. The disordered stretch occupies residues 21 to 102; that stretch reads AAETTTTPAP…PAKPAAQPAA (82 aa). The propeptide occupies 22–58; the sequence is AETTTTPAPTATTTKAAPAKTTHHKKQHKAAPAQKAQ. The segment covering 80 to 90 has biased composition (basic residues); sequence AAKKHAKKHSH. Low complexity predominate over residues 91-102; that stretch reads QQPAKPAAQPAA.

Belongs to the Asr family. Post-translationally, proteolytic processing gives rise to the active protein.

Its subcellular location is the periplasm. Functionally, required for growth and/or survival at acidic conditions. This chain is Acid shock protein, found in Escherichia coli (strain K12 / MC4100 / BW2952).